Consider the following 225-residue polypeptide: Cytidylate kinase (225 aa).

Residue 11-19 coordinates ATP; the sequence is GPAAAGKST.

The protein belongs to the cytidylate kinase family. Type 1 subfamily.

The protein localises to the cytoplasm. The enzyme catalyses CMP + ATP = CDP + ADP. It carries out the reaction dCMP + ATP = dCDP + ADP. In Bacillus pumilus (strain SAFR-032), this protein is Cytidylate kinase.